A 147-amino-acid polypeptide reads, in one-letter code: MTEIVEIFTDGACRGNPGPGGWGALLCYQGREKTLSGAESKTTNNRMELMAAIRALETLKRPCRVHLTTDSQYLRQGITCWLSNWKRRGWKTANRQPVKNIDLWQRLDQVAAQHRIEWFWVRGHEGHPGNERADALARSAITNGEEK.

The RNase H type-1 domain occupies 1-142; sequence MTEIVEIFTD…ADALARSAIT (142 aa). Mg(2+) is bound by residues D10, E48, D70, and D134.

Belongs to the RNase H family. As to quaternary structure, monomer. Requires Mg(2+) as cofactor.

The protein localises to the cytoplasm. It carries out the reaction Endonucleolytic cleavage to 5'-phosphomonoester.. Functionally, endonuclease that specifically degrades the RNA of RNA-DNA hybrids. The sequence is that of Ribonuclease H from Nitrosococcus oceani (strain ATCC 19707 / BCRC 17464 / JCM 30415 / NCIMB 11848 / C-107).